The sequence spans 538 residues: Cytochrome P450 monooxygenase flvC (538 aa).

Residues 17–37 traverse the membrane as a helical segment; the sequence is TVLIAGLLVYWVGSAIFLAVL. Cys478 is a heme binding site.

This sequence belongs to the cytochrome P450 family. The cofactor is heme.

The protein resides in the membrane. It catalyses the reaction pre-flavunoidine + reduced [NADPH--hemoprotein reductase] + O2 = 10-hydroxy-pre-flavunoidine + oxidized [NADPH--hemoprotein reductase] + H2O + H(+). The protein operates within secondary metabolite biosynthesis; terpenoid biosynthesis. In terms of biological role, cytochrome P450 monooxygenase; part of the gene cluster that mediates the biosynthesis of flavunoidine, an alkaloidal terpenoid with a tetracyclic cage-like core connected to dimethylcadaverine via a C-N bond and acylated with 5,5-dimethyl-L-pipecolate. The tetracyclic core is synthesized by the terpene cyclase flvE and the cytochrome P450 monooxygenase flvD. The terpene cyclase flvE catalyzes the cyclization of farnesyl pyrophosphate (FPP) to form (1R,4R,5S)-(+)-acoradiene and the cytochrome P450 monooxygenase flvD is then responsible for oxidative conversion of (1R,4R,5S)-(+)-acoradiene into the tetracyclic cage present in the final product flavunoidine. In parallel, the N-methyltransferase flvH dimethylates L-lysine to give N,N-dimethyl-L-Lysin which is decarboxylated by flvG to afford dimethylcadaverine. The terpene cyclase-like protein flvF is the enzyme that attaches the dimethylcadaverine precusor at the C-7 of the tetracyclic cage to yield pre-flavunoidine. The cytochrome monooxygenase flvC hydroxylates the C-10 position of pre-flavunoidine whereas the NRPS flvI acylates the terpenoid core at the hydroxylated C-10 with dimethylpipecolate to yield final flavunoidine. The bifunctional enzyme flvA and the dehydrogenase flvB are responsible for the synthesis of the dimethylpipecolate precursor. The PLP-dependent lyase domain of flvA might use L-O-acetyl-homoserine and alpha-keto-isovalerate to form an intermediary ketone that can cyclize intramolecularly to yield an imine. The imine can be reduced by flvB to yield the 6-carboxylated pipecolate. The C-terminal alpha-KG-dependent oxygenase domain of flvA is then proposed to catalyze the decarboxylation to yield dimethylpipecolate. This Aspergillus flavus (strain ATCC 200026 / FGSC A1120 / IAM 13836 / NRRL 3357 / JCM 12722 / SRRC 167) protein is Cytochrome P450 monooxygenase flvC.